The following is a 206-amino-acid chain: Small ribosomal subunit protein uS4 (206 aa).

The region spanning 96 to 156 (SRLDNVVYRM…EKSRNQSRIA (61 aa)) is the S4 RNA-binding domain.

The protein belongs to the universal ribosomal protein uS4 family. In terms of assembly, part of the 30S ribosomal subunit. Contacts protein S5. The interaction surface between S4 and S5 is involved in control of translational fidelity.

Functionally, one of the primary rRNA binding proteins, it binds directly to 16S rRNA where it nucleates assembly of the body of the 30S subunit. With S5 and S12 plays an important role in translational accuracy. The protein is Small ribosomal subunit protein uS4 of Hydrogenovibrio crunogenus (strain DSM 25203 / XCL-2) (Thiomicrospira crunogena).